The chain runs to 532 residues: Spore germination protein 270-11 (532 aa).

2 disordered regions span residues 113–225 (TTTS…GYGS) and 328–436 (LSPT…TTGT). A compositionally biased stretch (low complexity) spans 329 to 426 (SPTCSDSSSP…GSGSSSETQP (98 aa)). Repeat copies occupy residues 339–342 (TPTP), 343–346 (TETP), 347–350 (TETP), 351–354 (TETP), 355–358 (TETP), 359–362 (TETP), 363–366 (TETP), 367–370 (TETP), 371–374 (TETE), 375–378 (TPTP), 397–400 (TPTP), 401–404 (TETD), and 405–408 (TPTP). The segment at 339 to 378 (TPTPTETPTETPTETPTETPTETPTETPTETPTETETPTP) is 10 X 4 AA tandem repeats of T-[EP]-T-[EP]. Positions 397 to 408 (TPTPTETDTPTP) are 3 X 4 AA tandem repeats of T-[EP]-T-[PD].

The polypeptide is Spore germination protein 270-11 (celB) (Dictyostelium discoideum (Social amoeba)).